A 510-amino-acid chain; its full sequence is NAD(P)H-quinone oxidoreductase subunit 2 B, chloroplastic (510 aa).

12 consecutive transmembrane segments (helical) span residues 24–44 (LLLF…GLIL), 59–79 (WFYF…LFRW), 99–119 (IFQF…VEYI), 124–144 (MAIT…MFLC), 149–169 (LITI…LSGY), 183–203 (YLLM…WLYG), 229–249 (ISIA…PAPF), 295–315 (WHLL…LLAI), 323–343 (MLAY…IVGD), 354–374 (YMLF…LFGL), 395–415 (ALSL…AGFF), and 418–438 (LYLF…IGLL).

It belongs to the complex I subunit 2 family. NDH is composed of at least 16 different subunits, 5 of which are encoded in the nucleus.

Its subcellular location is the plastid. It localises to the chloroplast thylakoid membrane. The enzyme catalyses a plastoquinone + NADH + (n+1) H(+)(in) = a plastoquinol + NAD(+) + n H(+)(out). The catalysed reaction is a plastoquinone + NADPH + (n+1) H(+)(in) = a plastoquinol + NADP(+) + n H(+)(out). Its function is as follows. NDH shuttles electrons from NAD(P)H:plastoquinone, via FMN and iron-sulfur (Fe-S) centers, to quinones in the photosynthetic chain and possibly in a chloroplast respiratory chain. The immediate electron acceptor for the enzyme in this species is believed to be plastoquinone. Couples the redox reaction to proton translocation, and thus conserves the redox energy in a proton gradient. In Agrostis stolonifera (Creeping bentgrass), this protein is NAD(P)H-quinone oxidoreductase subunit 2 B, chloroplastic.